The following is a 657-amino-acid chain: MINVTLPDGSKREYAEGASPLDVAESISKSLAKKALAAKVDGQMWDLVRPLEGDASVAIITDRDPEGLELIRHDAAHVLAQAVQELYPDTQVTIGPVIDDGFYYDFARKEPFSTDDFDKIEARMREIVDADYPIVREVLGKDEAIATFKSLGEEYKAQIIDDIIPPGEQITVYRQGKWFDLCRGPHLPSTGKLPKAFKLMKLAGAYWRGDHRNEMLQRMYGTAWANEKDLKDHLTRLEEAEKRDHRKLGAQLDLFHFQPEAQGSVFWHPKGFMIWRELEAYIRRQQDADGYVEVKTPQLLNSVFWEKSGHWSKFRENMFVVPDEIPSTESDAPILSGEGELMALKPMNCPAHVQIFKNAQRSYRDLPIRMAEFGCCHRNEAHGALHGLMRVRQMTQDDAHIFCREDQIADETLRFLKLFETVYGDFGLSEISYKLATRPEMRAGTDETWDRAEKALADALTAAGMTFSIAEGEGAFYGPKLEFHLTDAIGRTWQCGTFQLDYVLPERLDAEYTGSDGAKHRPVMLHRAVFGTFERFMGILIENYAGSFPLWMSPVQVVVAAITDAAGDYAEEAAAALRKAGLRVEVDKRNETINYKVREHSVQKVPVIAVVGAREAEDRKLALRRLGSNGQQIISLDEALVALADEARAPDLKRARS.

In terms of domain architecture, TGS spans 1 to 61 (MINVTLPDGS…EGDASVAIIT (61 aa)). Residues 244–549 (DHRKLGAQLD…LIENYAGSFP (306 aa)) form a catalytic region. 3 residues coordinate Zn(2+): Cys-349, His-400, and His-526.

It belongs to the class-II aminoacyl-tRNA synthetase family. In terms of assembly, homodimer. It depends on Zn(2+) as a cofactor.

The protein localises to the cytoplasm. It catalyses the reaction tRNA(Thr) + L-threonine + ATP = L-threonyl-tRNA(Thr) + AMP + diphosphate + H(+). Functionally, catalyzes the attachment of threonine to tRNA(Thr) in a two-step reaction: L-threonine is first activated by ATP to form Thr-AMP and then transferred to the acceptor end of tRNA(Thr). Also edits incorrectly charged L-seryl-tRNA(Thr). This Hyphomonas neptunium (strain ATCC 15444) protein is Threonine--tRNA ligase.